A 110-amino-acid polypeptide reads, in one-letter code: U1-lycotoxin-Ls1jj (110 aa).

The N-terminal stretch at 1–20 (MKFVLLFGVLLVTLFSYSSA) is a signal peptide. Positions 21–44 (EMLDDFDQADEDELLSLIEKEEAR) are excised as a propeptide. Cystine bridges form between C47–C62, C54–C71, C61–C89, and C73–C87.

This sequence belongs to the neurotoxin 19 (CSTX) family. 03 subfamily. In terms of tissue distribution, expressed by the venom gland.

The protein resides in the secreted. The sequence is that of U1-lycotoxin-Ls1jj from Lycosa singoriensis (Wolf spider).